We begin with the raw amino-acid sequence, 405 residues long: L-carnitine CoA-transferase (405 aa).

CoA is bound by residues Lys-97 and Arg-104. Residue Asp-169 is the Nucleophile of the active site.

It belongs to the CoA-transferase III family. CaiB subfamily. As to quaternary structure, homodimer.

The protein resides in the cytoplasm. The enzyme catalyses crotonobetainyl-CoA + (R)-carnitine = crotonobetaine + (R)-carnitinyl-CoA. It catalyses the reaction 4-(trimethylamino)butanoyl-CoA + (R)-carnitine = (R)-carnitinyl-CoA + 4-(trimethylamino)butanoate. The protein operates within amine and polyamine metabolism; carnitine metabolism. In terms of biological role, catalyzes the reversible transfer of the CoA moiety from gamma-butyrobetainyl-CoA to L-carnitine to generate L-carnitinyl-CoA and gamma-butyrobetaine. Is also able to catalyze the reversible transfer of the CoA moiety from gamma-butyrobetainyl-CoA or L-carnitinyl-CoA to crotonobetaine to generate crotonobetainyl-CoA. The chain is L-carnitine CoA-transferase from Salmonella choleraesuis (strain SC-B67).